The chain runs to 104 residues: Phosphoribosyl-ATP pyrophosphatase (104 aa).

It belongs to the PRA-PH family.

The protein localises to the cytoplasm. The catalysed reaction is 1-(5-phospho-beta-D-ribosyl)-ATP + H2O = 1-(5-phospho-beta-D-ribosyl)-5'-AMP + diphosphate + H(+). It functions in the pathway amino-acid biosynthesis; L-histidine biosynthesis; L-histidine from 5-phospho-alpha-D-ribose 1-diphosphate: step 2/9. This Streptococcus sanguinis (strain SK36) protein is Phosphoribosyl-ATP pyrophosphatase.